The chain runs to 753 residues: 5-methyltetrahydropteroyltriglutamate--homocysteine methyltransferase (753 aa).

5-methyltetrahydropteroyltri-L-glutamate-binding positions include 17-20 and Lys117; that span reads RELK. L-homocysteine contacts are provided by residues 431–433 and Glu484; that span reads IGS. L-methionine-binding positions include 431-433 and Glu484; that span reads IGS. 5-methyltetrahydropteroyltri-L-glutamate is bound by residues 515–516 and Trp561; that span reads RC. An L-homocysteine-binding site is contributed by Asp599. Asp599 lines the L-methionine pocket. Glu605 is a binding site for 5-methyltetrahydropteroyltri-L-glutamate. Zn(2+)-binding residues include His641, Cys643, and Glu665. Catalysis depends on His694, which acts as the Proton donor. Cys726 is a Zn(2+) binding site.

This sequence belongs to the vitamin-B12 independent methionine synthase family. It depends on Zn(2+) as a cofactor.

The enzyme catalyses 5-methyltetrahydropteroyltri-L-glutamate + L-homocysteine = tetrahydropteroyltri-L-glutamate + L-methionine. Its pathway is amino-acid biosynthesis; L-methionine biosynthesis via de novo pathway; L-methionine from L-homocysteine (MetE route): step 1/1. Its function is as follows. Catalyzes the transfer of a methyl group from 5-methyltetrahydrofolate to homocysteine resulting in methionine formation. This chain is 5-methyltetrahydropteroyltriglutamate--homocysteine methyltransferase, found in Escherichia fergusonii (strain ATCC 35469 / DSM 13698 / CCUG 18766 / IAM 14443 / JCM 21226 / LMG 7866 / NBRC 102419 / NCTC 12128 / CDC 0568-73).